The chain runs to 64 residues: Large ribosomal subunit protein bL35 (64 aa).

Disordered stretches follow at residues 1–22 (MPKAKTHSGASKRFRRTGTGKI) and 34–64 (EHKPSTRTRRLDGHTRVSANDTQRVNSLLNG). Residues 34-48 (EHKPSTRTRRLDGHT) show a composition bias toward basic and acidic residues. Residues 50–64 (VSANDTQRVNSLLNG) show a composition bias toward polar residues.

This sequence belongs to the bacterial ribosomal protein bL35 family.

The polypeptide is Large ribosomal subunit protein bL35 (Mycobacterium leprae (strain Br4923)).